Here is a 218-residue protein sequence, read N- to C-terminus: TPA-induced transmembrane protein homolog (218 aa).

Residues 1–54 (MEEGSRSQSPREELELSMLDGPQEELTPLNNDLRIQPNSAEDPSPAQVGKESPW) form a disordered region. A helical membrane pass occupies residues 66–86 (KLWMVIVTIFLCFIIVIVISL).

It localises to the endoplasmic reticulum membrane. The sequence is that of TPA-induced transmembrane protein homolog from Mus musculus (Mouse).